The primary structure comprises 882 residues: Alanine--tRNA ligase (882 aa).

Zn(2+)-binding residues include H567, H571, C669, and H673.

Belongs to the class-II aminoacyl-tRNA synthetase family. Requires Zn(2+) as cofactor.

It is found in the cytoplasm. It carries out the reaction tRNA(Ala) + L-alanine + ATP = L-alanyl-tRNA(Ala) + AMP + diphosphate. In terms of biological role, catalyzes the attachment of alanine to tRNA(Ala) in a two-step reaction: alanine is first activated by ATP to form Ala-AMP and then transferred to the acceptor end of tRNA(Ala). Also edits incorrectly charged Ser-tRNA(Ala) and Gly-tRNA(Ala) via its editing domain. This is Alanine--tRNA ligase from Thermosynechococcus vestitus (strain NIES-2133 / IAM M-273 / BP-1).